We begin with the raw amino-acid sequence, 906 residues long: Alanine--tRNA ligase, chloroplastic/mitochondrial (906 aa).

Basic and acidic residues predominate over residues 1–10 (MSAATERERL). Positions 1-22 (MSAATERERLTNANPNARGKDN) are disordered. The Zn(2+) site is built by H589, H593, C691, and H695.

Belongs to the class-II aminoacyl-tRNA synthetase family. Monomer. It depends on Zn(2+) as a cofactor.

The protein resides in the plastid. It is found in the chloroplast. The protein localises to the mitochondrion. It carries out the reaction tRNA(Ala) + L-alanine + ATP = L-alanyl-tRNA(Ala) + AMP + diphosphate. Functionally, catalyzes the attachment of alanine to tRNA(Ala) in a two-step reaction: alanine is first activated by ATP to form Ala-AMP and then transferred to the acceptor end of tRNA(Ala). Also edits incorrectly charged tRNA(Ala) via its editing domain. This Ostreococcus lucimarinus (strain CCE9901) protein is Alanine--tRNA ligase, chloroplastic/mitochondrial.